We begin with the raw amino-acid sequence, 417 residues long: Mast cell carboxypeptidase A (417 aa).

A signal peptide spans 1 to 15 (MRLILPVGLIATTLA). Positions 16-109 (IAPVRFDREK…IEKQFDVKED (94 aa)) are cleaved as a propeptide — activation peptide. A Peptidase M14 domain is found at 118-412 (KYNNWEKIVA…LAVKFIAKYI (295 aa)). Cystine bridges form between C173-C186 and C245-C268. Residues H176 and E179 each coordinate Zn(2+). Residue H304 coordinates Zn(2+). E378 (proton donor/acceptor) is an active-site residue.

This sequence belongs to the peptidase M14 family. The cofactor is Zn(2+).

It is found in the cytoplasmic vesicle. The protein resides in the secretory vesicle. The enzyme catalyses Release of a C-terminal amino acid, but little or no action with -Asp, -Glu, -Arg, -Lys or -Pro.. This chain is Mast cell carboxypeptidase A (CPA3), found in Homo sapiens (Human).